A 170-amino-acid polypeptide reads, in one-letter code: Lipoprotein signal peptidase (170 aa).

The next 5 helical transmembrane spans lie at 13–33, 72–92, 96–113, 116–136, and 142–162; these read IFIS…VTYV, LFFL…SLKE, VSRF…GNII, LFRP…IFGL, and FNFA…YDLF. Active-site residues include aspartate 124 and aspartate 146.

This sequence belongs to the peptidase A8 family.

The protein resides in the cell inner membrane. The enzyme catalyses Release of signal peptides from bacterial membrane prolipoproteins. Hydrolyzes -Xaa-Yaa-Zaa-|-(S,diacylglyceryl)Cys-, in which Xaa is hydrophobic (preferably Leu), and Yaa (Ala or Ser) and Zaa (Gly or Ala) have small, neutral side chains.. It participates in protein modification; lipoprotein biosynthesis (signal peptide cleavage). Its function is as follows. This protein specifically catalyzes the removal of signal peptides from prolipoproteins. The sequence is that of Lipoprotein signal peptidase from Borrelia duttonii (strain Ly).